The chain runs to 393 residues: Elongation factor Tu (393 aa).

In terms of domain architecture, tr-type G spans 10–203; sequence KPHVNIGTIG…AVDEFIPEPV (194 aa). The tract at residues 19-26 is G1; the sequence is GHVDHGKT. 19 to 26 is a binding site for GTP; sequence GHVDHGKT. A Mg(2+)-binding site is contributed by Thr26. The G2 stretch occupies residues 60–64; sequence GITIS. The G3 stretch occupies residues 81 to 84; the sequence is DCPG. GTP-binding positions include 81-85 and 136-139; these read DCPGH and NKVD. A G4 region spans residues 136 to 139; sequence NKVD. The tract at residues 173–175 is G5; sequence SAL.

Belongs to the TRAFAC class translation factor GTPase superfamily. Classic translation factor GTPase family. EF-Tu/EF-1A subfamily. Monomer.

Its subcellular location is the cytoplasm. It carries out the reaction GTP + H2O = GDP + phosphate + H(+). Functionally, GTP hydrolase that promotes the GTP-dependent binding of aminoacyl-tRNA to the A-site of ribosomes during protein biosynthesis. This chain is Elongation factor Tu, found in Chlorobium limicola (strain DSM 245 / NBRC 103803 / 6330).